A 509-amino-acid polypeptide reads, in one-letter code: Activin receptor type-1 (509 aa).

An N-terminal signal peptide occupies residues 1–20 (MVDGAMILSVLMMMALPSPS). Topologically, residues 21 to 123 (MEDEEPKVNP…FPGSQNFHLE (103 aa)) are extracellular. An N-linked (GlcNAc...) asparagine glycan is attached at Asn102. The chain crosses the membrane as a helical span at residues 124–146 (VGLIILSVVFAVCLFACILGVAL). Residues 147–509 (RKFKRRNQER…NSLDKLKTDC (363 aa)) lie on the Cytoplasmic side of the membrane. The 30-residue stretch at 178–207 (STLAELLDHSCTSGSGSGLPFLVQRTVARQ) folds into the GS domain. The 295-residue stretch at 208–502 (ITLLECVGKG…KTLTKIDNSL (295 aa)) folds into the Protein kinase domain. Residues 214-222 (VGKGRYGEV) and Lys235 contribute to the ATP site. The active-site Proton acceptor is Asp336. Ser501 bears the Phosphoserine mark.

The protein belongs to the protein kinase superfamily. TKL Ser/Thr protein kinase family. TGFB receptor subfamily. Interacts with FKBP1A. Interacts with FCHO1. Interacts with CLU. Interacts with type II receptors AMHR2 and ACVR2A. Interacts with BMP7. Interacts with GDF2/BMP9. Interacts with BMP6 (when glycosylated); the interaction may induce HAMP expression. Interacts with TSC22D1/TSC-22. Mg(2+) serves as cofactor. Mn(2+) is required as a cofactor. In terms of tissue distribution, urogenital ridge, testis, ovary, brain and lungs.

The protein localises to the membrane. The enzyme catalyses L-threonyl-[receptor-protein] + ATP = O-phospho-L-threonyl-[receptor-protein] + ADP + H(+). It carries out the reaction L-seryl-[receptor-protein] + ATP = O-phospho-L-seryl-[receptor-protein] + ADP + H(+). Its function is as follows. Bone morphogenetic protein (BMP) type I receptor that is involved in a wide variety of biological processes, including bone, heart, cartilage, nervous, and reproductive system development and regulation. As a type I receptor, forms heterotetrameric receptor complexes with the type II receptors AMHR2, ACVR2A ors ACVR2B. Upon binding of ligands such as BMP7 or GDF2/BMP9 to the heteromeric complexes, type II receptors transphosphorylate ACVR1 intracellular domain. In turn, ACVR1 kinase domain is activated and subsequently phosphorylates SMAD1/5/8 proteins that transduce the signal. In addition to its role in mediating BMP pathway-specific signaling, suppresses TGFbeta/activin pathway signaling by interfering with the binding of activin to its type II receptor. Besides canonical SMAD signaling, can activate non-canonical pathways such as p38 mitogen-activated protein kinases/MAPKs. May promote the expression of HAMP, potentially via its interaction with BMP6. In Rattus norvegicus (Rat), this protein is Activin receptor type-1 (Acvr1).